Reading from the N-terminus, the 284-residue chain is HTH-type transcriptional activator RhaR (284 aa).

Residues 181 to 279 enclose the HTH araC/xylS-type domain; sequence DMLMNALRAS…GVSPSAYRQR (99 aa). 2 consecutive DNA-binding regions (H-T-H motif) follow at residues 198–219 and 246–269; these read EAFC…KEQT and IGDV…HQAF.

As to quaternary structure, binds DNA as a dimer.

The protein resides in the cytoplasm. Its function is as follows. Activates expression of the rhaSR operon in response to L-rhamnose. This chain is HTH-type transcriptional activator RhaR, found in Pectobacterium atrosepticum (strain SCRI 1043 / ATCC BAA-672) (Erwinia carotovora subsp. atroseptica).